We begin with the raw amino-acid sequence, 674 residues long: ATP-dependent DNA helicase Hel308 (674 aa).

Residues Gln27 and 44–51 contribute to the ATP site; that span reads VPTAAGKT. The Helicase ATP-binding domain occupies 31 to 197; that stretch reads IEQFRKGKNI…WLNASLIKSS (167 aa). Residues 142–145 carry the DEAH box motif; the sequence is DEIH. The 188-residue stretch at 224 to 411 folds into the Helicase C-terminal domain; it reads DINLLVKETV…PEKVRFNTLA (188 aa).

The protein belongs to the helicase family. Hel308 subfamily. As to quaternary structure, monomer.

It carries out the reaction Couples ATP hydrolysis with the unwinding of duplex DNA by translocating in the 3'-5' direction.. The enzyme catalyses ATP + H2O = ADP + phosphate + H(+). DNA-dependent ATPase and 3'-5' DNA helicase that may be involved in repair of stalled replication forks. In Thermoplasma volcanium (strain ATCC 51530 / DSM 4299 / JCM 9571 / NBRC 15438 / GSS1), this protein is ATP-dependent DNA helicase Hel308.